The sequence spans 107 residues: SH3 domain-binding glutamic acid-rich-like protein 2 (107 aa).

The SH3-binding signature appears at 61 to 67 (QGNPLPP).

It belongs to the SH3BGR family.

It is found in the nucleus. The polypeptide is SH3 domain-binding glutamic acid-rich-like protein 2 (SH3BGRL2) (Bos taurus (Bovine)).